The chain runs to 228 residues: 2-C-methyl-D-erythritol 4-phosphate cytidylyltransferase (228 aa).

It belongs to the IspD/TarI cytidylyltransferase family. IspD subfamily.

It catalyses the reaction 2-C-methyl-D-erythritol 4-phosphate + CTP + H(+) = 4-CDP-2-C-methyl-D-erythritol + diphosphate. The protein operates within isoprenoid biosynthesis; isopentenyl diphosphate biosynthesis via DXP pathway; isopentenyl diphosphate from 1-deoxy-D-xylulose 5-phosphate: step 2/6. Its function is as follows. Catalyzes the formation of 4-diphosphocytidyl-2-C-methyl-D-erythritol from CTP and 2-C-methyl-D-erythritol 4-phosphate (MEP). The protein is 2-C-methyl-D-erythritol 4-phosphate cytidylyltransferase of Geobacillus thermodenitrificans (strain NG80-2).